Here is a 299-residue protein sequence, read N- to C-terminus: Glycine--tRNA ligase alpha subunit (299 aa).

This sequence belongs to the class-II aminoacyl-tRNA synthetase family. Tetramer of two alpha and two beta subunits.

The protein resides in the cytoplasm. The enzyme catalyses tRNA(Gly) + glycine + ATP = glycyl-tRNA(Gly) + AMP + diphosphate. The chain is Glycine--tRNA ligase alpha subunit from Caulobacter vibrioides (strain ATCC 19089 / CIP 103742 / CB 15) (Caulobacter crescentus).